A 744-amino-acid chain; its full sequence is NAD(P)H-quinone oxidoreductase subunit 5, chloroplastic (744 aa).

16 consecutive transmembrane segments (helical) span residues 9 to 29 (WIMP…LLLF), 41 to 61 (AFPT…FFIL), 89 to 109 (VDPL…TVLI), 125 to 145 (FSYM…SNLI), 147 to 167 (IYIC…FWFT), 185 to 205 (GDFS…SFEF), 219 to 239 (NEIP…GALA), 258 to 278 (TPIS…FLVA), 280 to 300 (LLPL…IGII), 327 to 347 (LGYM…FHLI), 354 to 374 (ALLF…VGYS), 396 to 416 (TSFL…CFWS), 425 to 445 (WLYS…TAFY), 546 to 566 (LFPM…GIPF), 600 to 620 (FIPN…IASV), and 722 to 742 (LLLY…LYLF).

It belongs to the complex I subunit 5 family. NDH is composed of at least 16 different subunits, 5 of which are encoded in the nucleus.

The protein resides in the plastid. It localises to the chloroplast thylakoid membrane. The enzyme catalyses a plastoquinone + NADH + (n+1) H(+)(in) = a plastoquinol + NAD(+) + n H(+)(out). It catalyses the reaction a plastoquinone + NADPH + (n+1) H(+)(in) = a plastoquinol + NADP(+) + n H(+)(out). Its function is as follows. NDH shuttles electrons from NAD(P)H:plastoquinone, via FMN and iron-sulfur (Fe-S) centers, to quinones in the photosynthetic chain and possibly in a chloroplast respiratory chain. The immediate electron acceptor for the enzyme in this species is believed to be plastoquinone. Couples the redox reaction to proton translocation, and thus conserves the redox energy in a proton gradient. This chain is NAD(P)H-quinone oxidoreductase subunit 5, chloroplastic (ndhF), found in Pelargonium hortorum (Common geranium).